The chain runs to 206 residues: Large ribosomal subunit protein uL4 (206 aa).

The tract at residues 45–76 is disordered; the sequence is RQGNQSAKTRAEVSGGGKKPWRQKGTGRARQG.

This sequence belongs to the universal ribosomal protein uL4 family. Part of the 50S ribosomal subunit.

Functionally, one of the primary rRNA binding proteins, this protein initially binds near the 5'-end of the 23S rRNA. It is important during the early stages of 50S assembly. It makes multiple contacts with different domains of the 23S rRNA in the assembled 50S subunit and ribosome. Forms part of the polypeptide exit tunnel. The polypeptide is Large ribosomal subunit protein uL4 (Clostridium novyi (strain NT)).